The primary structure comprises 235 residues: MNKNVMVKGLTALDILTSLGCAENISDQPHSIAKAEKNVKEITDATKAPYNSVVAFAGGTGVVVGKNTIVTNKHIAKSNNIFKNRVSAHHSSKGKGGGNYDVKDIVEYPGKEDLAIVHVHETSTEGLNFNKNVSYTKFADGAKAKDRISIIGYPKGAQTKYKMFESTGTINHINGTIMEFDAYAQPGNSGSPVLNSKNELIGILYAGSGKDESEKNFGVYFTPQLKEFIQNNIEK.

An N-terminal signal peptide occupies residues 1 to 35; it reads MNKNVMVKGLTALDILTSLGCAENISDQPHSIAKA. Catalysis depends on charge relay system residues histidine 74, aspartate 113, and serine 189.

It belongs to the peptidase S1B family.

The protein resides in the secreted. The polypeptide is Serine protease SplA (splA) (Staphylococcus aureus).